The primary structure comprises 207 residues: Protein Nef (207 aa).

Glycine 2 carries N-myristoyl glycine; by host lipidation. Serine 6 carries the phosphoserine; by host modification. Positions 63–66 (EEZE) are acidic; interacts with host PACS1 and PACS2; stabilizes the interaction of NEF/MHC-I with host AP1M1; necessary for MHC-I internalization. The interval 70–79 (PVRPQVPLRP) is SH3-binding; interaction with Src family tyrosine kinases. A PxxP; stabilizes the interaction of NEF/MHC-I with host AP1M1; necessary for MHC-I internalization motif is present at residues 73 to 76 (PQVP). The interval 109–125 (EILDLWVYHTQGFFPDW) is mediates dimerization, Nef-PTE1 interaction. A binding to ATP6V1H region spans residues 149–181 (LSEEAVEEANEGDNNALLHPICQHGVDDDHKQV). The Dileucine internalization motif; necessary for CD4 internalization motif lies at 165–166 (LL). Residues 175–176 (DD) carry the Diacidic; necessary for CD4 internalization motif.

The protein belongs to the lentivirus primate group Nef protein family. Monomer; cytosolic form. Homodimer; membrane bound form. Interacts with Nef associated p21-activated kinase (PAK2); this interaction activates PAK2. Associates with the Nef-MHC-I-AP1 complex; this complex is required for MHC-I internalization. Interacts (via C-terminus) with host PI3-kinase. Interacts with host PACS1; this interaction seems to be weak. Interacts with host PACS2. Interacts with host LCK and MAPK3; these interactions inhibit the kinase activity of the latter. Interacts with host ATP6V1H; this interaction may play a role in CD4 endocytosis. Associates with the CD4-Nef-AP2 complex; this complex is required for CD4 internalization. Interacts with host AP2 subunit alpha and AP2 subunit sigma2. Interacts with TCR-zeta chain; this interaction up-regulates the Fas ligand (FasL) surface expression. Interacts with host HCK, LYN, and SRC; these interactions activate the Src family kinases. Interacts with MAP3K5; this interaction inhibits the Fas and TNFR-mediated death signals. Interacts with beta-COP and PTE1. Interacts with human RACK1; this increases Nef phosphorylation by PKC. Interacts with TP53; this interaction decreases the half-life of TP53, protecting the infected cell against p53-mediated apoptosis. In terms of processing, the virion-associated Nef proteins are cleaved by the viral protease to release the soluble C-terminal core protein. Nef is probably cleaved concomitantly with viral structural proteins on maturation of virus particles. Myristoylated. Post-translationally, phosphorylated on serine residues, probably by host PKCdelta and theta.

The protein resides in the host cell membrane. The protein localises to the virion. It is found in the secreted. Its subcellular location is the host Golgi apparatus membrane. In terms of biological role, factor of infectivity and pathogenicity, required for optimal virus replication. Alters numerous pathways of T-lymphocyte function and down-regulates immunity surface molecules in order to evade host defense and increase viral infectivity. Alters the functionality of other immunity cells, like dendritic cells, monocytes/macrophages and NK cells. Its function is as follows. In infected CD4(+) T-lymphocytes, down-regulates the surface MHC-I, mature MHC-II, CD4, CD28, CCR5 and CXCR4 molecules. Mediates internalization and degradation of host CD4 through the interaction of with the cytoplasmic tail of CD4, the recruitment of AP-2 (clathrin adapter protein complex 2), internalization through clathrin coated pits, and subsequent transport to endosomes and lysosomes for degradation. Diverts host MHC-I molecules to the trans-Golgi network-associated endosomal compartments by an endocytic pathway to finally target them for degradation. MHC-I down-regulation may involve AP-1 (clathrin adapter protein complex 1) or possibly Src family kinase-ZAP70/Syk-PI3K cascade recruited by PACS2. In consequence infected cells are masked for immune recognition by cytotoxic T-lymphocytes. Decreasing the number of immune receptors also prevents reinfection by more HIV particles (superinfection). Down-regulates host SERINC3 and SERINC5 thereby excluding these proteins from the viral particles. Virion infectivity is drastically higher when SERINC3 or SERINC5 are excluded from the viral envelope, because these host antiviral proteins impair the membrane fusion event necessary for subsequent virion penetration. Bypasses host T-cell signaling by inducing a transcriptional program nearly identical to that of anti-CD3 cell activation. Interaction with TCR-zeta chain up-regulates the Fas ligand (FasL). Increasing surface FasL molecules and decreasing surface MHC-I molecules on infected CD4(+) cells send attacking cytotoxic CD8+ T-lymphocytes into apoptosis. Functionally, plays a role in optimizing the host cell environment for viral replication without causing cell death by apoptosis. Protects the infected cells from apoptosis in order to keep them alive until the next virus generation is ready to strike. Inhibits the Fas and TNFR-mediated death signals by blocking MAP3K5/ASK1. Decreases the half-life of TP53, protecting the infected cell against p53-mediated apoptosis. Inhibits the apoptotic signals regulated by the Bcl-2 family proteins through the formation of a Nef/PI3-kinase/PAK2 complex that leads to activation of PAK2 and induces phosphorylation of host BAD. In terms of biological role, extracellular Nef protein targets CD4(+) T-lymphocytes for apoptosis by interacting with CXCR4 surface receptors. The sequence is that of Protein Nef from Homo sapiens (Human).